Reading from the N-terminus, the 128-residue chain is Mu-like prophage FluMu protein gp35 (128 aa).

Residues 53-87 (TETGSQEGGEGLSKEPAGSDEQKQLRADPPSTDLN) are disordered.

To phage Mu protein gp35. Monomer.

This Haemophilus influenzae (strain ATCC 51907 / DSM 11121 / KW20 / Rd) protein is Mu-like prophage FluMu protein gp35.